The primary structure comprises 144 residues: Large ribosomal subunit protein uL15 (144 aa).

The tract at residues Met1–Gln54 is disordered. Residues Arg21 to Gly31 are compositionally biased toward gly residues.

This sequence belongs to the universal ribosomal protein uL15 family. As to quaternary structure, part of the 50S ribosomal subunit.

In terms of biological role, binds to the 23S rRNA. The polypeptide is Large ribosomal subunit protein uL15 (Enterobacter sp. (strain 638)).